Reading from the N-terminus, the 155-residue chain is Small ribosomal subunit protein uS7c (155 aa).

It belongs to the universal ribosomal protein uS7 family. Part of the 30S ribosomal subunit.

It localises to the plastid. It is found in the chloroplast. Its function is as follows. One of the primary rRNA binding proteins, it binds directly to 16S rRNA where it nucleates assembly of the head domain of the 30S subunit. In Saruma henryi (Upright wild ginger), this protein is Small ribosomal subunit protein uS7c (rps7).